A 203-amino-acid chain; its full sequence is Thymidylate kinase (203 aa).

9–16 (GPEGAGKT) contributes to the ATP binding site.

This sequence belongs to the thymidylate kinase family.

The enzyme catalyses dTMP + ATP = dTDP + ADP. Its function is as follows. Phosphorylation of dTMP to form dTDP in both de novo and salvage pathways of dTTP synthesis. In Staphylococcus epidermidis (strain ATCC 35984 / DSM 28319 / BCRC 17069 / CCUG 31568 / BM 3577 / RP62A), this protein is Thymidylate kinase.